The following is a 324-amino-acid chain: Adenine deaminase (324 aa).

Zn(2+) contacts are provided by His8, His10, and His186. Residue Glu189 is the Proton donor of the active site. Zn(2+) is bound at residue Asp267. A substrate-binding site is contributed by Asp268.

This sequence belongs to the metallo-dependent hydrolases superfamily. Adenosine and AMP deaminases family. Adenine deaminase type 2 subfamily. The cofactor is Zn(2+).

It catalyses the reaction adenine + H2O + H(+) = hypoxanthine + NH4(+). Catalyzes the hydrolytic deamination of adenine to hypoxanthine. Plays an important role in the purine salvage pathway and in nitrogen catabolism. The protein is Adenine deaminase of Mesorhizobium japonicum (strain LMG 29417 / CECT 9101 / MAFF 303099) (Mesorhizobium loti (strain MAFF 303099)).